The following is a 351-amino-acid chain: Ion-translocating oxidoreductase complex subunit D (351 aa).

Helical transmembrane passes span 18–38 (IMLLVILACIPGIIAQTYFFG), 40–60 (GSLIQVMLAMITALLAEGAVL), 87–107 (LPPLAPWWMIVLGTLFAIVIA), and 121–141 (PAMVGYVVLLISFPVQMTSWL). Threonine 185 carries the FMN phosphoryl threonine modification. Helical transmembrane passes span 211-231 (VLAGLGWQWVNIGFLVGGLLL), 241-261 (IPVSFLLALGGCAAVSWMIAP), 264-284 (FASPMLHLFSGATMLGAFFIA), 298-318 (LIFGALIGILVWLIRVYGGYP), and 320-340 (GVAFAVLLANITVPLIDHYTQ).

The protein belongs to the NqrB/RnfD family. The complex is composed of six subunits: RnfA, RnfB, RnfC, RnfD, RnfE and RnfG. FMN is required as a cofactor.

It localises to the cell inner membrane. Part of a membrane-bound complex that couples electron transfer with translocation of ions across the membrane. The polypeptide is Ion-translocating oxidoreductase complex subunit D (Yersinia pseudotuberculosis serotype I (strain IP32953)).